Consider the following 519-residue polypeptide: 2,3-bisphosphoglycerate-independent phosphoglycerate mutase (519 aa).

Residues Asp9 and Ser60 each contribute to the Mn(2+) site. The active-site Phosphoserine intermediate is the Ser60. The segment covering 76-91 (DSARVSDSIARSRGEA) has biased composition (basic and acidic residues). The disordered stretch occupies residues 76–102 (DSARVSDSIARSRGEAPPDDDAQDPPF). Substrate-binding positions include His134, 163–164 (RD), Arg195, Arg201, 267–270 (RSDR), and Lys341. Mn(2+) contacts are provided by Asp408, His412, Asp449, His450, and His466.

This sequence belongs to the BPG-independent phosphoglycerate mutase family. Mn(2+) is required as a cofactor.

The catalysed reaction is (2R)-2-phosphoglycerate = (2R)-3-phosphoglycerate. Its pathway is carbohydrate degradation; glycolysis; pyruvate from D-glyceraldehyde 3-phosphate: step 3/5. Its function is as follows. Catalyzes the interconversion of 2-phosphoglycerate and 3-phosphoglycerate. This Haloarcula marismortui (strain ATCC 43049 / DSM 3752 / JCM 8966 / VKM B-1809) (Halobacterium marismortui) protein is 2,3-bisphosphoglycerate-independent phosphoglycerate mutase.